Here is a 206-residue protein sequence, read N- to C-terminus: Na(+)-translocating NADH-quinone reductase subunit E (206 aa).

The next 6 membrane-spanning stretches (helical) occupy residues 12 to 32 (AVFVENMALAFFLGMCTFLAV), 36 to 56 (ISSAIGLGIAVVVVLTITVPV), 85 to 105 (FLGLLSYIGVIAALVQILEMF), 118 to 138 (GVFLPLITVNCAILGASLFMV), 148 to 168 (VIYGAGAGVGWALAITALAGI), and 184 to 204 (LGITFITVGLMSLGFMSFSGI).

Belongs to the NqrDE/RnfAE family. In terms of assembly, composed of six subunits; NqrA, NqrB, NqrC, NqrD, NqrE and NqrF.

The protein localises to the cell inner membrane. The enzyme catalyses a ubiquinone + n Na(+)(in) + NADH + H(+) = a ubiquinol + n Na(+)(out) + NAD(+). Functionally, NQR complex catalyzes the reduction of ubiquinone-1 to ubiquinol by two successive reactions, coupled with the transport of Na(+) ions from the cytoplasm to the periplasm. NqrA to NqrE are probably involved in the second step, the conversion of ubisemiquinone to ubiquinol. In Chromohalobacter salexigens (strain ATCC BAA-138 / DSM 3043 / CIP 106854 / NCIMB 13768 / 1H11), this protein is Na(+)-translocating NADH-quinone reductase subunit E.